A 164-amino-acid polypeptide reads, in one-letter code: NADH-quinone oxidoreductase subunit I (164 aa).

4Fe-4S ferredoxin-type domains are found at residues 55–85 and 95–124; these read LRRY…IDAE and TRYD…EGPN. Residues Cys-65, Cys-68, Cys-71, Cys-75, Cys-104, Cys-107, Cys-110, and Cys-114 each coordinate [4Fe-4S] cluster.

The protein belongs to the complex I 23 kDa subunit family. As to quaternary structure, NDH-1 is composed of 14 different subunits. Subunits NuoA, H, J, K, L, M, N constitute the membrane sector of the complex. [4Fe-4S] cluster is required as a cofactor.

It localises to the cell inner membrane. It carries out the reaction a quinone + NADH + 5 H(+)(in) = a quinol + NAD(+) + 4 H(+)(out). In terms of biological role, NDH-1 shuttles electrons from NADH, via FMN and iron-sulfur (Fe-S) centers, to quinones in the respiratory chain. The immediate electron acceptor for the enzyme in this species is believed to be ubiquinone. Couples the redox reaction to proton translocation (for every two electrons transferred, four hydrogen ions are translocated across the cytoplasmic membrane), and thus conserves the redox energy in a proton gradient. The sequence is that of NADH-quinone oxidoreductase subunit I from Roseobacter denitrificans (strain ATCC 33942 / OCh 114) (Erythrobacter sp. (strain OCh 114)).